Here is a 147-residue protein sequence, read N- to C-terminus: MKFFLILGFCLLPLIAQGKVFQRCELAAAMKKHGLSNYRGYSLGHWVCAAKYESNFNTAAINRNRDGSSDYGILQINSRWWCNDGRTSGAKNLCKISCSALLSSDITASVNCAKRVVSDKNGMNAWVAWRNHCKGRDVSQWIRGCRV.

The signal sequence occupies residues 1–18 (MKFFLILGFCLLPLIAQG). One can recognise a C-type lysozyme domain in the interval 19–147 (KVFQRCELAA…VSQWIRGCRV (129 aa)). Intrachain disulfides connect Cys-24/Cys-145, Cys-48/Cys-133, Cys-82/Cys-98, and Cys-94/Cys-112. Catalysis depends on residues Glu-53 and Asp-70. Residue Asp-119 coordinates substrate.

Belongs to the glycosyl hydrolase 22 family. In terms of assembly, monomer. In terms of tissue distribution, expressed in liver and ovary. Not expressed in bone marrow, lung, spleen, intestine or oviduct.

Its subcellular location is the secreted. The enzyme catalyses Hydrolysis of (1-&gt;4)-beta-linkages between N-acetylmuramic acid and N-acetyl-D-glucosamine residues in a peptidoglycan and between N-acetyl-D-glucosamine residues in chitodextrins.. In terms of biological role, lysozymes have primarily a bacteriolytic function; those in tissues and body fluids are associated with the monocyte-macrophage system and enhance the activity of immunoagents. Has bacteriolytic activity against M.luteus. The polypeptide is Lysozyme C (Dromaius novaehollandiae (Emu)).